We begin with the raw amino-acid sequence, 146 residues long: Anti-sigma F factor (146 aa).

Belongs to the anti-sigma-factor family.

The enzyme catalyses L-seryl-[protein] + ATP = O-phospho-L-seryl-[protein] + ADP + H(+). It carries out the reaction L-threonyl-[protein] + ATP = O-phospho-L-threonyl-[protein] + ADP + H(+). Functionally, binds to sigma F and blocks its ability to form an RNA polymerase holoenzyme (E-sigma F). Phosphorylates SpoIIAA on a serine residue. This phosphorylation may enable SpoIIAA to act as an anti-anti-sigma factor that counteracts SpoIIAB and thus releases sigma F from inhibition. This chain is Anti-sigma F factor, found in Anoxybacillus flavithermus (strain DSM 21510 / WK1).